We begin with the raw amino-acid sequence, 434 residues long: Alpha-enolase (434 aa).

Position 40 (S40) interacts with Mg(2+). Substrate contacts are provided by H158 and E167. E210 functions as the Proton donor in the catalytic mechanism. 3 residues coordinate Mg(2+): D245, E293, and D318. Substrate contacts are provided by E293 and D318. Catalysis depends on K343, which acts as the Proton acceptor. Substrate contacts are provided by residues 370-373 (SHRS) and K394.

The protein belongs to the enolase family. Homodimer. The cofactor is Mg(2+).

Its subcellular location is the cytoplasm. It carries out the reaction (2R)-2-phosphoglycerate = phosphoenolpyruvate + H2O. It functions in the pathway carbohydrate degradation; glycolysis; pyruvate from D-glyceraldehyde 3-phosphate: step 4/5. Both an enzyme and a lens structural protein. This Anas platyrhynchos (Mallard) protein is Alpha-enolase (ENO1).